A 323-amino-acid polypeptide reads, in one-letter code: Fructose-1,6-bisphosphatase class 1 (323 aa).

Mg(2+)-binding residues include Glu-88, Asp-107, Leu-109, and Asp-110. Residues 110–113 (DGSS) and Asn-200 each bind substrate. Glu-272 contacts Mg(2+).

This sequence belongs to the FBPase class 1 family. In terms of assembly, homotetramer. The cofactor is Mg(2+).

The protein localises to the cytoplasm. The catalysed reaction is beta-D-fructose 1,6-bisphosphate + H2O = beta-D-fructose 6-phosphate + phosphate. It participates in carbohydrate biosynthesis; gluconeogenesis. The polypeptide is Fructose-1,6-bisphosphatase class 1 (Acinetobacter baumannii (strain ATCC 17978 / DSM 105126 / CIP 53.77 / LMG 1025 / NCDC KC755 / 5377)).